The sequence spans 343 residues: Signaling lymphocytic activation molecule (343 aa).

The first 24 residues, Met1–Gly24, serve as a signal peptide directing secretion. The Extracellular portion of the chain corresponds to Thr25–Pro242. One can recognise an Ig-like V-type domain in the interval Val29–Leu138. Residues Asn54, Asn58, Asn103, Asn126, Asn151, Asn158, Asn192, Asn211, and Asn226 are each glycosylated (N-linked (GlcNAc...) asparagine). Positions Pro145–Ser228 constitute an Ig-like C2-type domain. 2 disulfide bridges follow: Cys161-Cys232 and Cys167-Cys212. Residues Trp243–Ile265 traverse the membrane as a helical segment. Over Met266 to Ser343 the chain is Cytoplasmic. An ITSM 1 motif is present at residues Thr286–Val291. Phosphotyrosine; by FYN is present on residues Tyr288, Tyr315, and Tyr335. The SH2-binding motif lies at Thr313 to Ala318. The interval Glu320–Ser343 is disordered. Positions Gln327 to Ser343 are enriched in polar residues. The short motif at Thr333–Val338 is the ITSM 2 element.

In terms of assembly, interacts (via cytoplasmic domain) with SH2D1A and SH2D1B; SH2D1A mediates association with FYN; SH2D1A binds to phosphorylated and not phosphorylated ITSM 1. Interacts (via cytoplasmic domain phosphorylated on tyrosine residues) with INPP5D and PTPN11; presence of SH2D1A facilitates binding to INPP5D. Interacts with MAP4K1. Interacts with PIK3C3, BECN1 and UVRAG; indicative for an association with PI3K complex II (PI3KC3-C2). In terms of processing, phosphorylated on tyrosine residues by FYN.

Its subcellular location is the cell membrane. Its function is as follows. Self-ligand receptor of the signaling lymphocytic activation molecule (SLAM) family. SLAM receptors triggered by homo- or heterotypic cell-cell interactions are modulating the activation and differentiation of a wide variety of immune cells and thus are involved in the regulation and interconnection of both innate and adaptive immune response. Activities are controlled by presence or absence of small cytoplasmic adapter proteins, SH2D1A/SAP and/or SH2D1B/EAT-2. SLAMF1-induced signal-transduction events in T-lymphocytes are different from those in B-cells. Two modes of SLAMF1 signaling seem to exist: one depending on SH2D1A (and perhaps SH2D1B) and another in which protein-tyrosine phosphatase 2C (PTPN11)-dependent signal transduction operates. Initially it has been proposed that association with SH2D1A prevents binding to inhibitory effectors including INPP5D/SHIP1 and PTPN11/SHP-2. However, signaling is also regulated by SH2D1A which can simultaneously interact with and recruit FYN which subsequently phosphorylates and activates SLAMF1. Mediates IL-2-independent proliferation of activated T-cells during immune responses and induces IFN-gamma production. Downstreaming signaling involves INPP5D, DOK1 and DOK2 leading to inhibited IFN-gamma production in T-cells, and PRKCQ, BCL10 and NFKB1 leading to increased T-cell activation and Th2 cytokine production. Promotes T-cell receptor-induced IL-4 secretion by CD4(+) cells. Inhibits antigen receptor-mediated production of IFN-gamma, but not IL-2, in CD4(-)/CD8(-) T-cells. Required for IL-4 production by germinal centers T follicular helper (T(Fh))cells. May inhibit CD40-induced signal transduction in monocyte-derived dendritic cells. May play a role in allergic responses and may regulate allergen-induced Th2 cytokine and Th1 cytokine secretion. In conjunction with SLAMF6 controls the transition between positive selection and the subsequent expansion and differentiation of the thymocytic natural killer T (NKT) cell lineage. Involved in the peripheral differentiation of indifferent natural killer T (iNKT) cells toward a regulatory NKT2 type. In macrophages involved in down-regulation of IL-12, TNF-alpha and nitric oxide in response to lipopolysaccharide (LPS). In B-cells activates the ERK signaling pathway independently of SH2D1A but implicating both, SYK and INPP5D, and activates Akt signaling dependent on SYK and SH2D1A. In conjunction with CD84/SLAMF5 and SLAMF6 may be a negative regulator of the humoral immune response. In terms of biological role, (Microbial infection) Involved in innate immune response against Gram-negative bacteria in macrophages; probably recognizes OmpC and/or OmpF on the bacterial surface, regulates phagosome maturation and recruitment of the PI3K complex II (PI3KC3-C2) leading to accumulated of PdtIns(3)P and NOX2 activity in the phagosomes. This chain is Signaling lymphocytic activation molecule (Slamf1), found in Mus musculus (Mouse).